A 424-amino-acid polypeptide reads, in one-letter code: Cuticlin-1 (424 aa).

The signal sequence occupies residues Met-1–Ala-18. At Ile-19–Pro-392 the chain is on the extracellular side. Positions Glu-32–Gly-277 constitute a ZP domain. Cys-197 and Cys-252 are joined by a disulfide. A run of 4 repeats spans residues Ala-302 to Val-305, Ala-307 to Val-311, Ala-312 to Val-315, and Ala-320 to Ala-323. A 4 X 4 AA repeats of A-A-P-[AVI] region spans residues Ala-302–Ala-323. Residues Ile-393 to Ile-413 form a helical membrane-spanning segment. Topologically, residues Phe-414 to His-424 are cytoplasmic.

The protein resides in the cell membrane. It localises to the secreted. Functionally, component of the cuticles, which contributes to the formation of extracellular envelopes protecting the organism from the environment. Plays a role in alae formation in dauer larvae. The chain is Cuticlin-1 from Caenorhabditis elegans.